The sequence spans 138 residues: Proofreading thioesterase EntH (138 aa).

Glutamate 64 functions as the Nucleophile or proton acceptor in the catalytic mechanism.

It belongs to the thioesterase PaaI family. Homotetramer. Dimer of dimers. Interacts specifically with the aryl carrier protein (ArCP) domain of EntB.

It is found in the cytoplasm. Its pathway is siderophore biosynthesis; enterobactin biosynthesis. In terms of biological role, required for optimal enterobactin synthesis. Acts as a proofreading enzyme that prevents EntB misacylation by hydrolyzing the thioester bound existing between EntB and wrongly charged molecules. The chain is Proofreading thioesterase EntH from Salmonella arizonae (strain ATCC BAA-731 / CDC346-86 / RSK2980).